We begin with the raw amino-acid sequence, 340 residues long: tRNA N6-adenosine threonylcarbamoyltransferase (340 aa).

2 residues coordinate Fe cation: histidine 113 and histidine 117. Residues 135–139 (LVSGG), aspartate 169, glycine 182, aspartate 186, and asparagine 274 contribute to the substrate site. Residue aspartate 302 coordinates Fe cation.

This sequence belongs to the KAE1 / TsaD family. Fe(2+) is required as a cofactor.

It localises to the cytoplasm. It carries out the reaction L-threonylcarbamoyladenylate + adenosine(37) in tRNA = N(6)-L-threonylcarbamoyladenosine(37) in tRNA + AMP + H(+). Required for the formation of a threonylcarbamoyl group on adenosine at position 37 (t(6)A37) in tRNAs that read codons beginning with adenine. Is involved in the transfer of the threonylcarbamoyl moiety of threonylcarbamoyl-AMP (TC-AMP) to the N6 group of A37, together with TsaE and TsaB. TsaD likely plays a direct catalytic role in this reaction. The chain is tRNA N6-adenosine threonylcarbamoyltransferase from Mycolicibacterium gilvum (strain PYR-GCK) (Mycobacterium gilvum (strain PYR-GCK)).